A 160-amino-acid chain; its full sequence is Ribosomal RNA large subunit methyltransferase H (160 aa).

Residues leucine 76 and glycine 108 each contribute to the S-adenosyl-L-methionine site.

This sequence belongs to the RNA methyltransferase RlmH family. Homodimer.

Its subcellular location is the cytoplasm. It catalyses the reaction pseudouridine(1915) in 23S rRNA + S-adenosyl-L-methionine = N(3)-methylpseudouridine(1915) in 23S rRNA + S-adenosyl-L-homocysteine + H(+). Functionally, specifically methylates the pseudouridine at position 1915 (m3Psi1915) in 23S rRNA. This chain is Ribosomal RNA large subunit methyltransferase H, found in Rhodopseudomonas palustris (strain TIE-1).